The following is a 537-amino-acid chain: Glucocorticoid-induced transcript 1 protein (537 aa).

Disordered stretches follow at residues 1 to 45 and 62 to 254; these read MSTA…APAA and LLRG…HGNH. A phosphoserine mark is found at Ser69, Ser96, Ser98, and Ser99. Residues 69-86 are compositionally biased toward low complexity; it reads SPTRPAAAATAAAALGSL. Over residues 97-106 the composition is skewed to pro residues; the sequence is PSSPTPPPAA. Position 101 is a phosphothreonine (Thr101). A compositionally biased stretch (basic and acidic residues) spans 121–136; it reads RSPESRRRSSSPERRS. The segment covering 152-168 has biased composition (low complexity); it reads IRTSSTIRRTSSLDTIT. Phosphoserine occurs at positions 162 and 163. Residues Thr166 and Thr168 each carry the phosphothreonine modification. Over residues 178-192 the composition is skewed to basic and acidic residues; it reads RDPHVHYPSCMRDKA. Ser214 carries the post-translational modification Phosphoserine. Positions 217-244 form a coiled coil; the sequence is SADQLKEIAKLRQQLQRSKQSSRHSKEK. A Phosphoserine modification is found at Ser248. At Thr256 the chain carries Phosphothreonine. At Ser293 the chain carries Phosphoserine. Basic and acidic residues predominate over residues 309-321; the sequence is EVSKPLDIPDGRR. The interval 309–407 is disordered; it reads EVSKPLDIPD…KPNNSYMFKR (99 aa). A compositionally biased stretch (polar residues) spans 329 to 346; that stretch reads RSSSTRSIDTQTPSVQER. Thr333 is subject to Phosphothreonine. Ser335 carries the post-translational modification Phosphoserine. Thr340 is modified (phosphothreonine). Low complexity predominate over residues 347–359; that stretch reads SSSCSSHSPCVSP. A phosphoserine mark is found at Ser384, Ser388, Ser396, Ser402, and Ser470. A disordered region spans residues 495 to 520; that stretch reads SLSDDTSTADSLEPSAQQPSQQQQLL.

Predominantly expressed in thymus and testis, especially in CD4+CD8+ cells and at specific stages of spermatogenesis.

This chain is Glucocorticoid-induced transcript 1 protein (Glcci1), found in Mus musculus (Mouse).